The sequence spans 165 residues: Cytochrome b6-f complex subunit 4 (165 aa).

Helical transmembrane passes span 36–56, 95–115, and 131–151; these read LLYIFPVVILGTIACNVGLAV, LLGVLLMVSVPAGLLTVPFLE, and TVFLIGTVVALWLGIGATLPI.

It belongs to the cytochrome b family. PetD subfamily. The 4 large subunits of the cytochrome b6-f complex are cytochrome b6, subunit IV (17 kDa polypeptide, petD), cytochrome f and the Rieske protein, while the 4 small subunits are petG, petL, petM and petN. The complex functions as a dimer.

It is found in the plastid. The protein resides in the chloroplast thylakoid membrane. Functionally, component of the cytochrome b6-f complex, which mediates electron transfer between photosystem II (PSII) and photosystem I (PSI), cyclic electron flow around PSI, and state transitions. In Populus alba (White poplar), this protein is Cytochrome b6-f complex subunit 4.